Consider the following 184-residue polypeptide: ATP synthase subunit delta (184 aa).

It belongs to the ATPase delta chain family. As to quaternary structure, F-type ATPases have 2 components, F(1) - the catalytic core - and F(0) - the membrane proton channel. F(1) has five subunits: alpha(3), beta(3), gamma(1), delta(1), epsilon(1). F(0) has three main subunits: a(1), b(2) and c(10-14). The alpha and beta chains form an alternating ring which encloses part of the gamma chain. F(1) is attached to F(0) by a central stalk formed by the gamma and epsilon chains, while a peripheral stalk is formed by the delta and b chains.

The protein localises to the cell membrane. Its function is as follows. F(1)F(0) ATP synthase produces ATP from ADP in the presence of a proton or sodium gradient. F-type ATPases consist of two structural domains, F(1) containing the extramembraneous catalytic core and F(0) containing the membrane proton channel, linked together by a central stalk and a peripheral stalk. During catalysis, ATP synthesis in the catalytic domain of F(1) is coupled via a rotary mechanism of the central stalk subunits to proton translocation. Functionally, this protein is part of the stalk that links CF(0) to CF(1). It either transmits conformational changes from CF(0) to CF(1) or is implicated in proton conduction. This is ATP synthase subunit delta from Wolbachia pipientis subsp. Culex pipiens (strain wPip).